We begin with the raw amino-acid sequence, 379 residues long: Homoserine O-succinyltransferase (379 aa).

Residues 51–360 (NAVLICHALS…DSPYGHDAFL (310 aa)) form the AB hydrolase-1 domain. The active-site Nucleophile is the Ser157. Residue Arg227 coordinates substrate. Residues Asp323 and His356 contribute to the active site. Substrate is bound at residue Asp357.

The protein belongs to the AB hydrolase superfamily. MetX family. As to quaternary structure, homodimer.

The protein resides in the cytoplasm. It carries out the reaction L-homoserine + succinyl-CoA = O-succinyl-L-homoserine + CoA. It functions in the pathway amino-acid biosynthesis; L-methionine biosynthesis via de novo pathway; O-succinyl-L-homoserine from L-homoserine: step 1/1. Transfers a succinyl group from succinyl-CoA to L-homoserine, forming succinyl-L-homoserine. This chain is Homoserine O-succinyltransferase, found in Pseudomonas putida (strain ATCC 700007 / DSM 6899 / JCM 31910 / BCRC 17059 / LMG 24140 / F1).